We begin with the raw amino-acid sequence, 438 residues long: 5-methylthioadenosine/S-adenosylhomocysteine deaminase (438 aa).

Residues His66 and His68 each coordinate Zn(2+). The substrate site is built by Glu95, Arg148, and His188. His215 contributes to the Zn(2+) binding site. Substrate contacts are provided by Glu218 and Asp305. Position 305 (Asp305) interacts with Zn(2+).

Belongs to the metallo-dependent hydrolases superfamily. MTA/SAH deaminase family. Requires Zn(2+) as cofactor.

The enzyme catalyses S-adenosyl-L-homocysteine + H2O + H(+) = S-inosyl-L-homocysteine + NH4(+). It catalyses the reaction S-methyl-5'-thioadenosine + H2O + H(+) = S-methyl-5'-thioinosine + NH4(+). Functionally, catalyzes the deamination of 5-methylthioadenosine and S-adenosyl-L-homocysteine into 5-methylthioinosine and S-inosyl-L-homocysteine, respectively. Is also able to deaminate adenosine. The chain is 5-methylthioadenosine/S-adenosylhomocysteine deaminase from Halalkalibacterium halodurans (strain ATCC BAA-125 / DSM 18197 / FERM 7344 / JCM 9153 / C-125) (Bacillus halodurans).